A 339-amino-acid polypeptide reads, in one-letter code: Phosphate acyltransferase (339 aa).

This sequence belongs to the PlsX family. As to quaternary structure, homodimer. Probably interacts with PlsY.

It is found in the cytoplasm. The catalysed reaction is a fatty acyl-[ACP] + phosphate = an acyl phosphate + holo-[ACP]. It participates in lipid metabolism; phospholipid metabolism. In terms of biological role, catalyzes the reversible formation of acyl-phosphate (acyl-PO(4)) from acyl-[acyl-carrier-protein] (acyl-ACP). This enzyme utilizes acyl-ACP as fatty acyl donor, but not acyl-CoA. The polypeptide is Phosphate acyltransferase (Acetivibrio thermocellus (strain ATCC 27405 / DSM 1237 / JCM 9322 / NBRC 103400 / NCIMB 10682 / NRRL B-4536 / VPI 7372) (Clostridium thermocellum)).